The chain runs to 380 residues: Alkanesulfonate monooxygenase (380 aa).

It belongs to the SsuD family. Homotetramer.

It catalyses the reaction an alkanesulfonate + FMNH2 + O2 = an aldehyde + FMN + sulfite + H2O + 2 H(+). Catalyzes the desulfonation of aliphatic sulfonates. The sequence is that of Alkanesulfonate monooxygenase from Pectobacterium carotovorum subsp. carotovorum (strain PC1).